The primary structure comprises 166 residues: Protein YciF (166 aa).

In terms of assembly, homodimer.

The sequence is that of Protein YciF (yciF) from Escherichia coli (strain K12).